The sequence spans 214 residues: 3-demethoxyubiquinol 3-hydroxylase (214 aa).

The Fe cation site is built by Glu63, Glu93, His96, Glu145, Glu177, and His180.

This sequence belongs to the COQ7 family. Fe cation is required as a cofactor.

The protein localises to the cell membrane. It catalyses the reaction a 5-methoxy-2-methyl-3-(all-trans-polyprenyl)benzene-1,4-diol + AH2 + O2 = a 3-demethylubiquinol + A + H2O. The protein operates within cofactor biosynthesis; ubiquinone biosynthesis. Its function is as follows. Catalyzes the hydroxylation of 2-nonaprenyl-3-methyl-6-methoxy-1,4-benzoquinol during ubiquinone biosynthesis. The chain is 3-demethoxyubiquinol 3-hydroxylase from Psychrobacter cryohalolentis (strain ATCC BAA-1226 / DSM 17306 / VKM B-2378 / K5).